We begin with the raw amino-acid sequence, 184 residues long: Signal peptidase complex subunit 3 (184 aa).

The Cytoplasmic portion of the chain corresponds to 1 to 14; sequence MFSFVQRFQNVSNQ. The chain crosses the membrane as a helical; Signal-anchor for type II membrane protein span at residues 15–35; that stretch reads AFSMGIVMVVFIMASSYYQLI. At 36–184 the chain is on the lumenal side; that stretch reads NNNAFSVPSN…TLTVENKNKV (149 aa). N-linked (GlcNAc...) asparagine glycosylation is found at N102 and N173.

The protein belongs to the SPCS3 family. Component of the signal peptidase complex (SPC) composed of a catalytic subunit SEC11 and three accessory subunits SPC1, SPC2 and SPC3. The complex induces a local thinning of the ER membrane which is used to measure the length of the signal peptide (SP) h-region of protein substrates. This ensures the selectivity of the complex towards h-regions shorter than 18-20 amino acids. Interacts with SEC11. SPC associates with the translocon complex.

The protein resides in the endoplasmic reticulum membrane. Its function is as follows. Essential component of the signal peptidase complex (SPC) which catalyzes the cleavage of N-terminal signal sequences from nascent proteins as they are translocated into the lumen of the endoplasmic reticulum. Essential for the SPC catalytic activity, possibly by stabilizing and positioning the active center of the complex close to the lumenal surface. Essential for viability. The polypeptide is Signal peptidase complex subunit 3 (SPC3) (Saccharomyces cerevisiae (strain ATCC 204508 / S288c) (Baker's yeast)).